Consider the following 362-residue polypeptide: NAD(P)H-quinone oxidoreductase subunit 1, chloroplastic (362 aa).

8 helical membrane-spanning segments follow: residues 29-49 (ILPILTLLLGITIEVLVIVWL), 103-123 (IAVISILLSFLVIPLGYHFVL), 128-148 (IGVFLWIAISSIAPIGLLMAG), 164-184 (AAQSISYEIPLTFCVLAISLL), 202-222 (FFGWNIWRQPIGFLVFLISSL), 247-267 (YSGIKYGLFYLVSYLNLLVSS), 303-323 (TIGIFITLTKAYLFLFISITI), and 335-355 (LLNLGWKFLLPISLGNLLLTT).

This sequence belongs to the complex I subunit 1 family. NDH is composed of at least 16 different subunits, 5 of which are encoded in the nucleus.

The protein resides in the plastid. It localises to the chloroplast thylakoid membrane. It carries out the reaction a plastoquinone + NADH + (n+1) H(+)(in) = a plastoquinol + NAD(+) + n H(+)(out). The enzyme catalyses a plastoquinone + NADPH + (n+1) H(+)(in) = a plastoquinol + NADP(+) + n H(+)(out). Its function is as follows. NDH shuttles electrons from NAD(P)H:plastoquinone, via FMN and iron-sulfur (Fe-S) centers, to quinones in the photosynthetic chain and possibly in a chloroplast respiratory chain. The immediate electron acceptor for the enzyme in this species is believed to be plastoquinone. Couples the redox reaction to proton translocation, and thus conserves the redox energy in a proton gradient. The polypeptide is NAD(P)H-quinone oxidoreductase subunit 1, chloroplastic (Agrostis stolonifera (Creeping bentgrass)).